The following is a 1836-amino-acid chain: Druantia protein DruE (1836 aa).

Positions Ser-108–Pro-405 constitute a Helicase ATP-binding domain. Thr-121–Thr-128 provides a ligand contact to ATP. The short motif at Asp-347 to His-350 is the DEAH box element. The Helicase C-terminal domain occupies Asp-1014–Ala-1199.

The protein resides in the cytoplasm. Its function is as follows. Component of antiviral defense system Druantia type I, composed of DruA, DruB, DruC, DruD and DruE. Expression of Druantia in E.coli (strain MG1655) confers resistance to phage lambda, SECphi18, SECphi27 and T4. This protein is probably a helicase. The protein is Druantia protein DruE of Escherichia coli (strain UMEA 4076-1).